We begin with the raw amino-acid sequence, 316 residues long: Endochitinase 2 (316 aa).

The N-terminal stretch at 1 to 18 (EFTTLFLLFSVLLLSASA) is a signal peptide. In terms of domain architecture, Chitin-binding type-1 spans 19–60 (EQCGSQAGGALCASGLCCSKFGWCGNTNDYCGPGNCQSQCPG). Cystine bridges form between C21/C36, C30/C42, C35/C49, C54/C58, C87/C150, C162/C170, and C269/C301. Residue E132 is the Proton donor of the active site. Positions 310–316 (GLLVDTV) are cleaved as a propeptide — removed in mature form, vacuolar targeting.

This sequence belongs to the glycosyl hydrolase 19 family. Chitinase class I subfamily.

The protein localises to the vacuole. It carries out the reaction Random endo-hydrolysis of N-acetyl-beta-D-glucosaminide (1-&gt;4)-beta-linkages in chitin and chitodextrins.. Its function is as follows. Defense against chitin-containing fungal pathogens. In Solanum tuberosum (Potato), this protein is Endochitinase 2 (CHTB2).